The following is a 507-amino-acid chain: MRNTLIPILVAICLFITGVAILNIQLWYSAKAEYLAGARYAANNINHILEEASQATQTAVNIAGKECNLEEQYQLGTEAALKPHLRTIIILKQGIVWCTSLPGNRVLLSRIPVFPDSNLLLAPAIDTVNRLPILLYQNQFADTRILVTISDQHIRGALNVPLKGVRYVLRVADDIIGPTGDVMTLNGHYPYTEKVHSTKYHFTIIFNPPPLFSFYRLIDKGFGILIFILLIACAAAFLLDRYFNKSATPEEILRRAINNGEIVPFYQPVVNGREGTLRGVEVLARWKQPHGGYISPAAFIPLAEKSGLIVPLTQSLMNQVARQMNAIASKLPEGFHIGINFSASHIISPTFVDECLNFRDSFTRRDLNLVLEVTEREPLNVDESLVQRLNILHENGFVIALDDFGTGYSGLSYLHDLHIDYIKIDHSFVGRVNADPESTRILDCVLDLARKLSISIVAEGVETKEQLDYLNQNYITFQQGYYFYKPVTYIDLVKIILSKPKVKVVVE.

The next 2 helical transmembrane spans lie at 4–24 (TLIP…ILNI) and 217–237 (LIDK…AAAF). One can recognise an EAL domain in the interval 246–500 (SATPEEILRR…DLVKIILSKP (255 aa)).

It localises to the cell membrane. The catalysed reaction is 3',3'-c-di-GMP + H2O = 5'-phosphoguanylyl(3'-&gt;5')guanosine + H(+). Functionally, phosphodiesterase (PDE) that catalyzes the hydrolysis of cyclic-di-GMP (c-di-GMP) to 5'-pGpG. This Escherichia coli (strain K12) protein is Probable cyclic di-GMP phosphodiesterase PdeG.